A 266-amino-acid chain; its full sequence is Undecaprenyl-diphosphatase (266 aa).

8 helical membrane passes run 1–21, 39–59, 87–107, 111–131, 149–169, 183–203, 218–238, and 246–266; these read MDTF…FLPI, QGLS…VIYF, WWII…KDFI, LRSA…LWWA, ALLI…RSGA, AAAR…AILV, ALTL…HYFL, and MTPF…FIFL.

Belongs to the UppP family.

The protein resides in the cell inner membrane. It carries out the reaction di-trans,octa-cis-undecaprenyl diphosphate + H2O = di-trans,octa-cis-undecaprenyl phosphate + phosphate + H(+). Its function is as follows. Catalyzes the dephosphorylation of undecaprenyl diphosphate (UPP). Confers resistance to bacitracin. This is Undecaprenyl-diphosphatase from Shewanella putrefaciens (strain CN-32 / ATCC BAA-453).